The chain runs to 306 residues: uncharacterized protein (306 aa).

The protein to M.tuberculosis Rv1486c, M.bovis Mb1522c and M.leprae ML1804.

This is an uncharacterized protein from Mycobacterium avium.